The chain runs to 71 residues: Exodeoxyribonuclease 7 small subunit (71 aa).

The protein belongs to the XseB family. Heterooligomer composed of large and small subunits.

The protein resides in the cytoplasm. The catalysed reaction is Exonucleolytic cleavage in either 5'- to 3'- or 3'- to 5'-direction to yield nucleoside 5'-phosphates.. Functionally, bidirectionally degrades single-stranded DNA into large acid-insoluble oligonucleotides, which are then degraded further into small acid-soluble oligonucleotides. The sequence is that of Exodeoxyribonuclease 7 small subunit from Endomicrobium trichonymphae.